The sequence spans 897 residues: Leucine--tRNA ligase (897 aa).

The 'HIGH' region motif lies at 49-59 (PYPSGKLHMGH). Residues 654–658 (KMSKS) carry the 'KMSKS' region motif. Position 657 (lysine 657) interacts with ATP.

It belongs to the class-I aminoacyl-tRNA synthetase family.

It is found in the cytoplasm. It carries out the reaction tRNA(Leu) + L-leucine + ATP = L-leucyl-tRNA(Leu) + AMP + diphosphate. The polypeptide is Leucine--tRNA ligase (Methylibium petroleiphilum (strain ATCC BAA-1232 / LMG 22953 / PM1)).